A 758-amino-acid polypeptide reads, in one-letter code: MRYNQFSYIKTDGQVAKKELENLGFHFPISNKPKEIFRSFLNTYFFQSSDKDYQIASFIADFETDLLSFFNADKPLTKEIFDMVSLQLLGFIPGFDFENLKEFTSQIAFPVPFNENDLFASIHHLLGTRHKNGMLLIDDLISKGFLGPDNTYHFFNGKTLATFDTSQLIKEVVYVEAPIDSDNDGKSDLIKVMILRPRSQKQIPTVMTASPYHQGINEVANDKKLHSMQTDLPLKEAHKIHVADASISTLVCENADLPITENTEQFSYIDSYTLNDYFLSRGFANIYVSGVGTADSDGFMTSGDYVQIESFKAIIDWLNGRAKAFTSHKREAYVLANWSNGKVATTGKSYLGTMSNGLATTGVEGLEVIIAEAAISSWYDYYRENGLICSPGGYPGEDLDVLTELTYSRSLHAGDFLRQKEKYYQLLNQQSQAIDRDSGDYNQFWHDRNYLPNAKNVTCEVVFTHGLQDWNVKPRQVYNMFNALPGSVAKHLFLHHGQHVYMHNWQSIDFKECMNALLCQKLLGIASNFQLPAILWQNNQEEQKWQSLEEFGTSNTFRIPLGEGFAKISNQYSTETFERYSKDFKSFKRDLFSGKANQLSLEFPLDQDLQLNGEAILHLSLTSSVSKGLISAQLLDKGLKKRLGDTPTILDLKVMDNGQNFSREDLKELPMRESTERVISKGVLNLQNRDGLLEVQSVEADQWLSFDFKLQPSLYQLRKGDCLQVLLYTTDFEHTVRDNSDYELRINLEKSYLSLPIA.

Active-site charge relay system residues include serine 349, aspartate 469, and histidine 499.

The protein belongs to the peptidase S15 family. As to quaternary structure, homodimer.

It is found in the cytoplasm. The catalysed reaction is Hydrolyzes Xaa-Pro-|- bonds to release unblocked, N-terminal dipeptides from substrates including Ala-Pro-|-p-nitroanilide and (sequentially) Tyr-Pro-|-Phe-Pro-|-Gly-Pro-|-Ile.. Removes N-terminal dipeptides sequentially from polypeptides having unsubstituted N-termini provided that the penultimate residue is proline. The protein is Xaa-Pro dipeptidyl-peptidase of Streptococcus uberis (strain ATCC BAA-854 / 0140J).